Consider the following 493-residue polypeptide: Probable cytosol aminopeptidase (493 aa).

Lys260 and Asp265 together coordinate Mn(2+). Residue Lys272 is part of the active site. Positions 284, 343, and 345 each coordinate Mn(2+). The active site involves Arg347.

This sequence belongs to the peptidase M17 family. The cofactor is Mn(2+).

It localises to the cytoplasm. The catalysed reaction is Release of an N-terminal amino acid, Xaa-|-Yaa-, in which Xaa is preferably Leu, but may be other amino acids including Pro although not Arg or Lys, and Yaa may be Pro. Amino acid amides and methyl esters are also readily hydrolyzed, but rates on arylamides are exceedingly low.. It carries out the reaction Release of an N-terminal amino acid, preferentially leucine, but not glutamic or aspartic acids.. Its function is as follows. Presumably involved in the processing and regular turnover of intracellular proteins. Catalyzes the removal of unsubstituted N-terminal amino acids from various peptides. This is Probable cytosol aminopeptidase from Nostoc punctiforme (strain ATCC 29133 / PCC 73102).